We begin with the raw amino-acid sequence, 709 residues long: Translation initiation factor IF-2 (709 aa).

Basic and acidic residues-rich tracts occupy residues 47 to 70 (DHQYRPNTGKKEEKKAEKKTEKPK) and 105 to 121 (KGKETKKTEAQQQEKKL). A disordered region spans residues 47-157 (DHQYRPNTGK…QPAKKEKELP (111 aa)). Over residues 125 to 137 (AKKKGKGPAKGKK) the composition is skewed to basic residues. A compositionally biased stretch (low complexity) spans 138–149 (QAAPAAKQAPQP). Residues 240–409 (ERPPVVTIMG…LLVSEMEELK (170 aa)) form the tr-type G domain. Positions 249-256 (GHVDHGKT) are G1. 249–256 (GHVDHGKT) lines the GTP pocket. Positions 274-278 (GITQH) are G2. A G3 region spans residues 295 to 298 (DTPG). Residues 295-299 (DTPGH) and 349-352 (NKID) each bind GTP. The segment at 349-352 (NKID) is G4. Residues 385–387 (SAK) are G5.

The protein belongs to the TRAFAC class translation factor GTPase superfamily. Classic translation factor GTPase family. IF-2 subfamily.

The protein localises to the cytoplasm. Its function is as follows. One of the essential components for the initiation of protein synthesis. Protects formylmethionyl-tRNA from spontaneous hydrolysis and promotes its binding to the 30S ribosomal subunits. Also involved in the hydrolysis of GTP during the formation of the 70S ribosomal complex. This is Translation initiation factor IF-2 from Geobacillus kaustophilus (strain HTA426).